The following is a 67-amino-acid chain: Photosystem II reaction center protein H (67 aa).

The helical transmembrane segment at 27–47 (GAVPVMAFIGVLLLVFLVILL) threads the bilayer.

Belongs to the PsbH family. In terms of assembly, PSII is composed of 1 copy each of membrane proteins PsbA, PsbB, PsbC, PsbD, PsbE, PsbF, PsbH, PsbI, PsbJ, PsbK, PsbL, PsbM, PsbT, PsbX, PsbY, Psb30/Ycf12, peripheral proteins PsbO, CyanoQ (PsbQ), PsbU, PsbV and a large number of cofactors. It forms dimeric complexes.

It localises to the cellular thylakoid membrane. Functionally, one of the components of the core complex of photosystem II (PSII), required for its stability and/or assembly. PSII is a light-driven water:plastoquinone oxidoreductase that uses light energy to abstract electrons from H(2)O, generating O(2) and a proton gradient subsequently used for ATP formation. It consists of a core antenna complex that captures photons, and an electron transfer chain that converts photonic excitation into a charge separation. This is Photosystem II reaction center protein H from Prochlorococcus marinus (strain MIT 9211).